The chain runs to 315 residues: Adenine deaminase (315 aa).

H14, H16, and H194 together coordinate Zn(2+). E197 functions as the Proton donor in the catalytic mechanism. Zn(2+) is bound at residue D275. D276 provides a ligand contact to substrate.

This sequence belongs to the metallo-dependent hydrolases superfamily. Adenosine and AMP deaminases family. Adenine deaminase type 2 subfamily. Zn(2+) serves as cofactor.

The catalysed reaction is adenine + H2O + H(+) = hypoxanthine + NH4(+). In terms of biological role, catalyzes the hydrolytic deamination of adenine to hypoxanthine. Plays an important role in the purine salvage pathway and in nitrogen catabolism. The chain is Adenine deaminase from Ectopseudomonas mendocina (strain ymp) (Pseudomonas mendocina).